Consider the following 308-residue polypeptide: Adipolin (308 aa).

The N-terminal stretch at 1 to 21 (MWAWGWAAAALLWLQTAGAGA) is a signal peptide. Residues 36-119 (DSPNITTSNR…PPGSPGVGVT (84 aa)) are disordered. An N-linked (GlcNAc...) asparagine glycan is attached at N39. Over residues 82 to 93 (RKRCRGRDKKSR) the composition is skewed to basic residues. Residues 99–113 (PGPPGPPGPPGPPGS) show a composition bias toward pro residues. The 156-residue stretch at 153–308 (QRLVVEAFYC…SSFSGMLLGT (156 aa)) folds into the C1q domain.

Belongs to the adipolin/erythroferrone family. Homomultimer; disulfide-linked. Adipolin fC1QTNF12: homotrimer; disulfide-linked. Adipolin gC1QTNF12: homodimer; disulfide-linked. May interact with ERFE. Post-translationally, processed into Adipolin fC1QTNF12 and Adipolin gC1QTNF12 by FURIN. Insulin enhances endogenous C1QTNF12 cleavage. In terms of tissue distribution, widely expressed, with high expression in subcutaneous and epididymal white adipose tissues and brown adipose tissue. Expressed in adipocytes (at protein level).

It is found in the secreted. Functionally, insulin-sensitizing adipocyte-secreted protein (adipokine) that regulates glucose metabolism in liver and adipose tissue. Promotes glucose uptake in adipocytes and suppresses de novo glucose production in hepatocytes via the PI3K-Akt signaling pathway. Administration lead to reduction of blood glucose. Able to attenuate inflammation in fat tissue. In terms of biological role, acts by activating the Akt signaling in hepatocytes and adipocytes. Not able to increase insulin-stimulated glucose uptake in adipocytes. Its function is as follows. Acts by activating the MAP kinase. Increases insulin-stimulated glucose uptake in adipocytes. This Mus musculus (Mouse) protein is Adipolin (C1qtnf12).